The following is a 302-amino-acid chain: tRNA pseudouridine synthase B (302 aa).

D40 acts as the Nucleophile in catalysis.

This sequence belongs to the pseudouridine synthase TruB family. Type 1 subfamily.

The catalysed reaction is uridine(55) in tRNA = pseudouridine(55) in tRNA. Its function is as follows. Responsible for synthesis of pseudouridine from uracil-55 in the psi GC loop of transfer RNAs. The polypeptide is tRNA pseudouridine synthase B (Shouchella clausii (strain KSM-K16) (Alkalihalobacillus clausii)).